The sequence spans 623 residues: Xaa-Pro aminopeptidase 1 (623 aa).

Arg77 contributes to the a peptide binding site. Lys304 bears the N6-acetyllysine mark. Residue His395 coordinates a peptide. Positions 415, 426, and 489 each coordinate Mn(2+). A peptide is bound by residues His489, His498, and Glu523. Residues Glu523 and Glu537 each coordinate Mn(2+).

This sequence belongs to the peptidase M24B family. In terms of assembly, homodimer. Mn(2+) is required as a cofactor.

The protein localises to the cytoplasm. The protein resides in the cytosol. The enzyme catalyses Release of any N-terminal amino acid, including proline, that is linked to proline, even from a dipeptide or tripeptide.. Its function is as follows. Metalloaminopeptidase that catalyzes the removal of a penultimate prolyl residue from the N-termini of peptides, such as Arg-Pro-Pro. Contributes to the degradation of bradykinin. This Bos taurus (Bovine) protein is Xaa-Pro aminopeptidase 1 (XPNPEP1).